A 1045-amino-acid polypeptide reads, in one-letter code: Elongation factor 3 (1045 aa).

HEAT repeat units follow at residues 5–42 (DQSL…GNII), 43–85 (EHDI…PSVE), 86–123 (PFVI…AINP), 125–162 (AIKA…AAKE), 166–203 (LRMP…TVDN), 205–241 (DIER…EVTP), and 242–279 (ATLS…LVED). The ADP site is built by I42, H44, and S83. Residues T392, H396, and E397 each contribute to the ADP site. 2 ABC transporter domains span residues 426 to 641 (DEGE…YYEL) and 667 to 993 (VKVS…KKED). The ADP site is built by N703, E922, N925, and H951. The segment at 974–1045 (SGHNWVSGQG…AYVSSDDEDF (72 aa)) is disordered. Positions 1007-1031 (GGKKKKKLSSAELRKKKKERMKKKK) are enriched in basic residues.

Belongs to the ABC transporter superfamily. ABCF family. EF3 subfamily. As to quaternary structure, monomer.

It localises to the cytoplasm. Its subcellular location is the cytosol. It catalyses the reaction ATP + H2O = ADP + phosphate + H(+). It functions in the pathway protein biosynthesis; polypeptide chain elongation. Its function is as follows. Ribosome-dependent ATPase that functions in cytoplasmic translation elongation. Required for the ATP-dependent release of deacylated tRNA from the ribosomal E-site during protein biosynthesis. Stimulates the eEF1A-dependent binding of aminoacyl-tRNA to the ribosomal A-site, which has reduced affinity for tRNA as long as the E-site is occupied. Assists translation termination by stimulating the release of nascent protein from the ribosome by release factors. This Candida glabrata (strain ATCC 2001 / BCRC 20586 / JCM 3761 / NBRC 0622 / NRRL Y-65 / CBS 138) (Yeast) protein is Elongation factor 3 (TEF3).